An 804-amino-acid polypeptide reads, in one-letter code: Probable replication endonuclease from prophage-like region 1 (804 aa).

Residues Y498 and Y502 each act as O-(5'-phospho-DNA)-tyrosine intermediate in the active site.

This sequence belongs to the phage GPA family.

Possible endonuclease which induces a single-strand cut and initiates DNA replication. This Salmonella typhi protein is Probable replication endonuclease from prophage-like region 1.